The following is a 363-amino-acid chain: 3-isopropylmalate dehydrogenase (363 aa).

79–92 lines the NAD(+) pocket; it reads GPKWEHLPPNDQPE. 4 residues coordinate substrate: Arg-100, Arg-110, Arg-139, and Asp-228. 3 residues coordinate Mg(2+): Asp-228, Asp-252, and Asp-256. 286 to 298 contacts NAD(+); that stretch reads GSAPDIAGKNIAN.

This sequence belongs to the isocitrate and isopropylmalate dehydrogenases family. LeuB type 1 subfamily. As to quaternary structure, homodimer. Mg(2+) serves as cofactor. Requires Mn(2+) as cofactor.

Its subcellular location is the cytoplasm. The enzyme catalyses (2R,3S)-3-isopropylmalate + NAD(+) = 4-methyl-2-oxopentanoate + CO2 + NADH. It functions in the pathway amino-acid biosynthesis; L-leucine biosynthesis; L-leucine from 3-methyl-2-oxobutanoate: step 3/4. Its function is as follows. Catalyzes the oxidation of 3-carboxy-2-hydroxy-4-methylpentanoate (3-isopropylmalate) to 3-carboxy-4-methyl-2-oxopentanoate. The product decarboxylates to 4-methyl-2 oxopentanoate. This chain is 3-isopropylmalate dehydrogenase, found in Vibrio vulnificus (strain CMCP6).